Consider the following 226-residue polypeptide: Probable proteasome subunit beta type-1 (226 aa).

The propeptide at 1–24 (MATTVKDTMNVDINAIKKGEIRMG) is removed in mature form. T25 serves as the catalytic Nucleophile.

The protein belongs to the peptidase T1B family. The 26S proteasome consists of a 20S proteasome core and two 19S regulatory subunits. The 20S proteasome core is composed of 28 subunits that are arranged in four stacked rings, resulting in a barrel-shaped structure. The two end rings are each formed by seven alpha subunits, and the two central rings are each formed by seven beta subunits. The catalytic chamber with the active sites is on the inside of the barrel.

It localises to the cytoplasm. The protein resides in the nucleus. The catalysed reaction is Cleavage of peptide bonds with very broad specificity.. In terms of biological role, the proteasome is a multicatalytic proteinase complex which is characterized by its ability to cleave peptides with Arg, Phe, Tyr, Leu, and Glu adjacent to the leaving group at neutral or slightly basic pH. The proteasome has an ATP-dependent proteolytic activity. This is Probable proteasome subunit beta type-1 (pre3) from Schizosaccharomyces pombe (strain 972 / ATCC 24843) (Fission yeast).